A 99-amino-acid polypeptide reads, in one-letter code: Aspartyl/glutamyl-tRNA(Asn/Gln) amidotransferase subunit C (99 aa).

This sequence belongs to the GatC family. In terms of assembly, heterotrimer of A, B and C subunits.

It catalyses the reaction L-glutamyl-tRNA(Gln) + L-glutamine + ATP + H2O = L-glutaminyl-tRNA(Gln) + L-glutamate + ADP + phosphate + H(+). The catalysed reaction is L-aspartyl-tRNA(Asn) + L-glutamine + ATP + H2O = L-asparaginyl-tRNA(Asn) + L-glutamate + ADP + phosphate + 2 H(+). Functionally, allows the formation of correctly charged Asn-tRNA(Asn) or Gln-tRNA(Gln) through the transamidation of misacylated Asp-tRNA(Asn) or Glu-tRNA(Gln) in organisms which lack either or both of asparaginyl-tRNA or glutaminyl-tRNA synthetases. The reaction takes place in the presence of glutamine and ATP through an activated phospho-Asp-tRNA(Asn) or phospho-Glu-tRNA(Gln). The chain is Aspartyl/glutamyl-tRNA(Asn/Gln) amidotransferase subunit C from Kineococcus radiotolerans (strain ATCC BAA-149 / DSM 14245 / SRS30216).